A 201-amino-acid chain; its full sequence is Probable molybdenum cofactor guanylyltransferase (201 aa).

GTP-binding positions include 16–18 (LAG), lysine 28, aspartate 75, and aspartate 107. Aspartate 107 is a Mg(2+) binding site.

This sequence belongs to the MobA family. Mg(2+) serves as cofactor.

The protein resides in the cytoplasm. The enzyme catalyses Mo-molybdopterin + GTP + H(+) = Mo-molybdopterin guanine dinucleotide + diphosphate. Transfers a GMP moiety from GTP to Mo-molybdopterin (Mo-MPT) cofactor (Moco or molybdenum cofactor) to form Mo-molybdopterin guanine dinucleotide (Mo-MGD) cofactor. In Mycobacterium bovis (strain ATCC BAA-935 / AF2122/97), this protein is Probable molybdenum cofactor guanylyltransferase.